A 61-amino-acid chain; its full sequence is Photosystem II reaction center protein K (61 aa).

The propeptide occupies 1-24 (MPNILSLTCICFNSVIYPTSFFFA). Residues 32 to 52 (IFNPIVDFMPVIPVLFFLLAF) form a helical membrane-spanning segment.

The protein belongs to the PsbK family. In terms of assembly, PSII is composed of 1 copy each of membrane proteins PsbA, PsbB, PsbC, PsbD, PsbE, PsbF, PsbH, PsbI, PsbJ, PsbK, PsbL, PsbM, PsbT, PsbX, PsbY, PsbZ, Psb30/Ycf12, at least 3 peripheral proteins of the oxygen-evolving complex and a large number of cofactors. It forms dimeric complexes.

Its subcellular location is the plastid. It is found in the chloroplast thylakoid membrane. In terms of biological role, one of the components of the core complex of photosystem II (PSII). PSII is a light-driven water:plastoquinone oxidoreductase that uses light energy to abstract electrons from H(2)O, generating O(2) and a proton gradient subsequently used for ATP formation. It consists of a core antenna complex that captures photons, and an electron transfer chain that converts photonic excitation into a charge separation. This chain is Photosystem II reaction center protein K, found in Oryza nivara (Indian wild rice).